Consider the following 891-residue polypeptide: Alanine--tRNA ligase (891 aa).

Zn(2+)-binding residues include His574, His578, Cys676, and His680.

It belongs to the class-II aminoacyl-tRNA synthetase family. Zn(2+) serves as cofactor.

It localises to the cytoplasm. It carries out the reaction tRNA(Ala) + L-alanine + ATP = L-alanyl-tRNA(Ala) + AMP + diphosphate. Its function is as follows. Catalyzes the attachment of alanine to tRNA(Ala) in a two-step reaction: alanine is first activated by ATP to form Ala-AMP and then transferred to the acceptor end of tRNA(Ala). Also edits incorrectly charged Ser-tRNA(Ala) and Gly-tRNA(Ala) via its editing domain. In Synechococcus sp. (strain WH7803), this protein is Alanine--tRNA ligase.